The primary structure comprises 253 residues: Phosphate import ATP-binding protein PstB 1 (253 aa).

In terms of domain architecture, ABC transporter spans 7–248 (LQIRDLSVYY…PKRKETEDYI (242 aa)). 39–46 (GPSGSGKS) contacts ATP.

This sequence belongs to the ABC transporter superfamily. Phosphate importer (TC 3.A.1.7) family. As to quaternary structure, the complex is composed of two ATP-binding proteins (PstB), two transmembrane proteins (PstC and PstA) and a solute-binding protein (PstS).

It is found in the cell membrane. The enzyme catalyses phosphate(out) + ATP + H2O = ADP + 2 phosphate(in) + H(+). Part of the ABC transporter complex PstSACB involved in phosphate import. Responsible for energy coupling to the transport system. The sequence is that of Phosphate import ATP-binding protein PstB 1 from Streptococcus pyogenes serotype M2 (strain MGAS10270).